The following is a 466-amino-acid chain: Asparagine--tRNA ligase (466 aa).

It belongs to the class-II aminoacyl-tRNA synthetase family. As to quaternary structure, homodimer.

It is found in the cytoplasm. It carries out the reaction tRNA(Asn) + L-asparagine + ATP = L-asparaginyl-tRNA(Asn) + AMP + diphosphate + H(+). The chain is Asparagine--tRNA ligase from Shewanella pealeana (strain ATCC 700345 / ANG-SQ1).